The primary structure comprises 462 residues: Glycoprotein endo-alpha-1,2-mannosidase (462 aa).

The Cytoplasmic portion of the chain corresponds to 1–8; it reads MAKFRRGT. A helical; Signal-anchor for type II membrane protein membrane pass occupies residues 9 to 29; it reads CIILALFILFIFSLMMGLKML. Residues 30–462 lie on the Lumenal side of the membrane; sequence RPNTATFGAP…YALDHQLPVS (433 aa). Residues 60 to 462 form a catalytic region; sequence DFQKSDRINS…YALDHQLPVS (403 aa).

This sequence belongs to the glycosyl hydrolase 99 family. Post-translationally, undergoes proteolytic cleavage in the C-terminal region.

The protein resides in the golgi apparatus membrane. The enzyme catalyses N-{alpha-Glc-(1-&gt;3)-alpha-Man-(1-&gt;2)-alpha-Man-(1-&gt;2)-alpha-Man-(1-&gt;3)-[alpha-Man-(1-&gt;2)-alpha-Man-(1-&gt;3)-[alpha-Man-(1-&gt;2)-alpha-Man-(1-&gt;6)]-alpha-Man-(1-&gt;6)]-beta-Man-(1-&gt;4)-beta-GlcNAc-(1-&gt;4)-beta-GlcNAc}-L-asparaginyl-[protein] + H2O = alpha-D-glucosyl-(1-&gt;3)-D-mannopyranose + N(4)-{alpha-D-Man-(1-&gt;2)-alpha-D-Man-(1-&gt;3)-[alpha-D-Man-(1-&gt;2)-alpha-D-Man-(1-&gt;3)-[alpha-D-Man-(1-&gt;2)-alpha-D-Man-(1-&gt;6)]-alpha-D-Man-(1-&gt;6)]-beta-D-Man-(1-&gt;4)-beta-D-GlaNAc-(1-&gt;4)-beta-D-GlcNAc}-L-asparaginyl-[protein] (N-glucan mannose isomer 8A1,2,3B1,2). This chain is Glycoprotein endo-alpha-1,2-mannosidase (MANEA), found in Pongo abelii (Sumatran orangutan).